Consider the following 176-residue polypeptide: MQSQVRQNFNSDCEAAINRMVNLEMYASYVYLSMSYYFDRDDVALHHVAKFFKEQSHEEREHAEKFLKYQNKRGGRVVLQDIKKPERDEWSNTLEAMQAALQLEKTVNQALLDLHKLASDKVDPQLCDFLESEYLEEQVKAMKELGDYITNLKRLGVPQNGMGEYLFDKHTLGESS.

Residues 7-156 (QNFNSDCEAA…DYITNLKRLG (150 aa)) enclose the Ferritin-like diiron domain. Residues glutamate 24, glutamate 59, histidine 62, glutamate 104, and glutamine 138 each coordinate Fe cation.

Belongs to the ferritin family. In terms of assembly, oligomer of 24 subunits. There are two types of subunits: L (light) chain and H (heavy) chain. The functional molecule is roughly spherical and contains a central cavity into which the insoluble mineral iron core is deposited.

It is found in the cytoplasm. It catalyses the reaction 4 Fe(2+) + O2 + 4 H(+) = 4 Fe(3+) + 2 H2O. Functionally, stores iron in a soluble, non-toxic, readily available form. Important for iron homeostasis. Has ferroxidase activity. Iron is taken up in the ferrous form and deposited as ferric hydroxides after oxidation. The protein is Ferritin heavy chain B (fth1-b) of Xenopus laevis (African clawed frog).